A 231-amino-acid polypeptide reads, in one-letter code: Claudin-10 (231 aa).

A helical transmembrane segment spans residues 1 to 21 (MASTALEIVAFVVSISGWVLV). Topologically, residues 22–80 (SSTLPTDYWKVSTIDGTVITTATYFANLWKICVTDSTGVANCKEFPSMLALDGYIQACR) are extracellular. The chain crosses the membrane as a helical span at residues 81 to 101 (GLMIAAVSLGFFGSIFALFGM). Topologically, residues 102 to 115 (KCTKVGGSDQAKAK) are cytoplasmic. Residues 116–136 (IACLAGIVFILSGLCSMTGCS) traverse the membrane as a helical segment. Over 137-160 (LYANKITTEFFDPLYMEQKYELGA) the chain is Extracellular. A helical membrane pass occupies residues 161–181 (ALFIGWAGASLCIIGGVIFCF). Topologically, residues 182–231 (SISDNNKTPRMGYTYNGPTSAMSSRTKYQGGEGDFKTTGPSKQFDKNAYV) are cytoplasmic.

Belongs to the claudin family. Can form homodimers both in trans (interaction between CLDN10 molecules in opposing membranes) and in cis (interaction between CLDN10 molecules within one membrane). Interacts with CLDN19. As to expression, widely expressed, with highest expression detected in brain cortex, kidney and lung. In kidney, the expression is highest in medulla, with transcripts being detected in medullary thick ascending limb of Henle's loop (mTAL) and outer and inner medullary collecting ducts. Expressed in salivary glands and skin. In terms of tissue distribution, detected in kidney with transcripts being detected in PCT, mTAL and cortical collecting duct. Detected in uterus. Expressed in proximal tubules (at protein level). Only detected in kidney and uterus. As to expression, detected in kidney with transcripts being detected in PCT, mTAL and cortical collecting duct. Detected in uterus. In terms of tissue distribution, expressed in the inner ear where it is detected in organ of Corti, marginal cells of stria vascularis, Reissner's membrane and spiral limbus (at protein level).

It is found in the cell junction. It localises to the tight junction. The protein resides in the cell membrane. The protein localises to the endoplasmic reticulum. It catalyses the reaction Na(+)(in) = Na(+)(out). The enzyme catalyses Li(+)(in) = Li(+)(out). It carries out the reaction K(+)(in) = K(+)(out). The catalysed reaction is Rb(+)(in) = Rb(+)(out). It catalyses the reaction Cs(+)(in) = Cs(+)(out). The enzyme catalyses NH4(+)(in) = NH4(+)(out). It carries out the reaction methylamine(out) = methylamine(in). The catalysed reaction is Mg(2+)(in) = Mg(2+)(out). It catalyses the reaction Ca(2+)(in) = Ca(2+)(out). The enzyme catalyses Sr(2+)(in) = Sr(2+)(out). It carries out the reaction chloride(in) = chloride(out). The catalysed reaction is nitrate(in) = nitrate(out). Forms paracellular channels: polymerizes in tight junction strands with cation- and anion-selective channels through the strands, conveying epithelial permeability in a process known as paracellular tight junction permeability. In terms of biological role, forms cation-selective paracellular channels. In sweat glands and in the thick ascending limb (TAL) of Henle's loop in kidney, it controls paracellular sodium permeability which is essential for proper sweat production and renal function. Its function is as follows. Forms anion-selective paracellular channels. In renal proximal tubules, it conveys selective chloride over hydrogencarbonate anion permeability which is required for renal chloride reabsorption and salt homeostasis. The sequence is that of Claudin-10 from Mus musculus (Mouse).